A 1090-amino-acid polypeptide reads, in one-letter code: Vinculin (1090 aa).

2 consecutive repeat copies span residues 339-446 (DADN…SQNS) and 455-561 (QNAQ…DLGD). Residues 339 to 561 (DADNVTVMRK…LKNALRDLGD (223 aa)) are 2 X repeats. Disordered stretches follow at residues 811–842 (GVPMSNGRHSSYQESISRASPYNPPPPSSQVI) and 864–895 (DIPAPPRPPPPVELSPPPRPPPPPEYDEEEET). Positions 817 to 830 (GRHSSYQESISRAS) are enriched in polar residues. Residues 866–887 (PAPPRPPPPVELSPPPRPPPPP) are compositionally biased toward pro residues.

Belongs to the vinculin/alpha-catenin family. May interact with sorb-1. Expressed in gonadal sheath cells and the spermatheca. Expressed in body wall muscles.

The protein localises to the cytoplasm. It is found in the cytoskeleton. The protein resides in the cell junction. Its subcellular location is the adherens junction. It localises to the cell membrane. The protein localises to the focal adhesion. Its function is as follows. Involved in cell adhesion. May be involved in the attachment of the actin-based microfilaments to the plasma membrane. Involved in ovulation. This Caenorhabditis elegans protein is Vinculin.